The sequence spans 371 residues: Glutamate 5-kinase (371 aa).

Lys14 provides a ligand contact to ATP. Substrate-binding residues include Ser54, Asp141, and Asn153. Residue 173–174 (TD) coordinates ATP. The PUA domain maps to 280-357 (AGDLILDDGA…TQIEKLLGYI (78 aa)).

It belongs to the glutamate 5-kinase family.

It is found in the cytoplasm. It catalyses the reaction L-glutamate + ATP = L-glutamyl 5-phosphate + ADP. Its pathway is amino-acid biosynthesis; L-proline biosynthesis; L-glutamate 5-semialdehyde from L-glutamate: step 1/2. Catalyzes the transfer of a phosphate group to glutamate to form L-glutamate 5-phosphate. The protein is Glutamate 5-kinase of Aromatoleum aromaticum (strain DSM 19018 / LMG 30748 / EbN1) (Azoarcus sp. (strain EbN1)).